The sequence spans 622 residues: ABC transporter permease protein YxdM (622 aa).

10 helical membrane passes run 20–40, 56–76, 118–138, 154–174, 195–215, 219–239, 279–299, 498–518, 558–578, and 590–610; these read AFFLSSAFSVLIFFTFAMFLF, GLTAAEWMIFVFSFLFVLYSV, AGIIGGFIFSKTFFTVGAYIL, ITACGFLLLFFFLSQFTILFV, PSVLLSLFGIACLCGGYGMVL, VHGAEPFIILLLTVIGTYFFF, LFFIVSIISAVAFTATGVLAM, TVQLPSLSLFIGLFIAIVFFV, IQLAILFFFPFVIAVMHTLFA, and VAGPLSLTIGGFFIFQLLFFL.

This sequence belongs to the ABC-4 integral membrane protein family. The complex is composed of two ATP-binding proteins (YxdL) and two transmembrane proteins (YxdM).

Its subcellular location is the cell membrane. Its function is as follows. Part of the ABC transporter complex YxdLM which could be involved in peptide resistance. In Bacillus subtilis (strain 168), this protein is ABC transporter permease protein YxdM (yxdM).